The chain runs to 229 residues: Ribonuclease T (229 aa).

One can recognise an Exonuclease domain in the interval 23 to 197; that stretch reads VIIDVETAGF…YDTERTAELF (175 aa). Aspartate 26, glutamate 28, histidine 184, and aspartate 189 together coordinate Mg(2+). Histidine 184 functions as the Proton donor/acceptor in the catalytic mechanism.

Belongs to the RNase T family. As to quaternary structure, homodimer. Mg(2+) serves as cofactor.

Trims short 3' overhangs of a variety of RNA species, leaving a one or two nucleotide 3' overhang. Responsible for the end-turnover of tRNA: specifically removes the terminal AMP residue from uncharged tRNA (tRNA-C-C-A). Also appears to be involved in tRNA biosynthesis. The chain is Ribonuclease T from Haemophilus influenzae (strain PittEE).